The sequence spans 397 residues: Ubiquitin-like modifier-activating enzyme 5 (397 aa).

Gly-76, Asp-97, Lys-120, Asn-143, and Asn-177 together coordinate ATP. 2 residues coordinate Zn(2+): Cys-219 and Cys-222. Cys-243 (glycyl thioester intermediate) is an active-site residue. Residues Cys-296 and Cys-301 each coordinate Zn(2+). The UFM1-interacting sequence (UIS) motif lies at Ile-327–Val-339. The linker stretch occupies residues Ser-340–Lys-370. Residues Glu-382–Leu-397 carry the UFC1-binding sequence (UFC) motif.

It belongs to the ubiquitin-activating E1 family. UBA5 subfamily. As to quaternary structure, homodimer; homodimerization is required for UFM1 activation. Interacts (via UIS motif) with UFM1; binds UFM1 via a trans-binding mechanism in which UFM1 interacts with distinct sites in both subunits of the UBA5 homodimer. Interacts (via C-terminus) with UFC1.

It is found in the cytoplasm. The protein resides in the nucleus. The protein localises to the endoplasmic reticulum membrane. Its subcellular location is the golgi apparatus. E1-like enzyme which specifically catalyzes the first step in ufmylation. Activates UFM1 by first adenylating its C-terminal glycine residue with ATP, and thereafter linking this residue to the side chain of a cysteine residue in E1, yielding a UFM1-E1 thioester and free AMP. Activates UFM1 via a trans-binding mechanism, in which UFM1 interacts with distinct sites in both subunits of the UBA5 homodimer. Trans-binding also promotes stabilization of the UBA5 homodimer, and enhances ATP-binding. Transfer of UFM1 from UBA5 to the E2-like enzyme UFC1 also takes place using a trans mechanism. Ufmylation plays a key role in various processes, such as ribosome recycling, response to DNA damage, interferon response or reticulophagy (also called ER-phagy). The sequence is that of Ubiquitin-like modifier-activating enzyme 5 from Gallus gallus (Chicken).